A 115-amino-acid polypeptide reads, in one-letter code: Secreted RxLR effector protein 2 (115 aa).

A signal peptide spans 1 to 22; sequence MICRSPLIVVMLFVIAAHTVLA. Residues 57–82 carry the RxLR-dEER motif; it reads RFLRQETTFEKKLGVNDVHAVHAEER.

The protein belongs to the RxLR effector family.

Its subcellular location is the secreted. The protein resides in the host cytoplasm. It localises to the host nucleus. In terms of biological role, effector that acts as a broad suppressor of cell death to interrupt plant immunity. Inhibits cell death induced by cell death-inducing proteins, including the PAMP elicitor INF1 from P.infestans. In Plasmopara viticola (Downy mildew of grapevine), this protein is Secreted RxLR effector protein 2.